The primary structure comprises 347 residues: Fructose-1,6-bisphosphatase class 1 (347 aa).

Residues Glu106, Asp128, Ile130, and Asp131 each coordinate Mg(2+). Substrate contacts are provided by residues 131-134 (DGSS), Asn223, Tyr251, and Lys281. Glu287 contributes to the Mg(2+) binding site.

Belongs to the FBPase class 1 family. In terms of assembly, homotetramer. Mg(2+) serves as cofactor.

It is found in the cytoplasm. It catalyses the reaction beta-D-fructose 1,6-bisphosphate + H2O = beta-D-fructose 6-phosphate + phosphate. It participates in carbohydrate biosynthesis; Calvin cycle. The sequence is that of Fructose-1,6-bisphosphatase class 1 from Synechocystis sp. (strain ATCC 27184 / PCC 6803 / Kazusa).